Reading from the N-terminus, the 325-residue chain is Neural proliferation differentiation and control protein 1 (325 aa).

The N-terminal stretch at 1-34 (MATPLPPPSPRHLRLLRLLLSGLVLGAALRGAAA) is a signal peptide. Positions 138–175 (QGLELGLPSTPGTPTPTPHTSLGSPVSSDPVHMSPLEP) are disordered. The helical transmembrane segment at 182 to 202 (GLALVLILAFCVAGAAALSVA) threads the bilayer. Ser-229 bears the Phosphoserine mark. The interval 266–290 (EPPKELDTASSDEENEDGDFTVYEC) is disordered. Acidic residues predominate over residues 275-284 (SSDEENEDGD).

It belongs to the NPDC1/cab-1 family. As to expression, strongly expressed in adult brain; especially in hippocampus, frontal lobe and temporal lobe.

Its subcellular location is the membrane. In terms of biological role, suppresses oncogenic transformation in neural and non-neural cells and down-regulates neural cell proliferation. Might be involved in transcriptional regulation. This is Neural proliferation differentiation and control protein 1 (NPDC1) from Homo sapiens (Human).